A 420-amino-acid polypeptide reads, in one-letter code: Transcriptional adapter 2-beta (420 aa).

A ZZ-type zinc finger spans residues 4 to 59 (LSKKYCVYCLADVTSLRLRCTECQDIELCTDCFSAGAEIGNHRRWHGYQLVDGGRF). Residues cysteine 9, cysteine 12, cysteine 23, cysteine 26, cysteine 32, cysteine 35, histidine 45, and histidine 49 each coordinate Zn(2+). The 54-residue stretch at 65–118 (EAEGGWTSREEQLLLDAIEQFGFGNWEDMAAHVGASRTPTEVMEHYVTMYIHGN) folds into the SANT domain. Residues 303 to 333 (EESAEYEAARHKREKRKENKNIANSKRGRED) form a disordered region.

The protein resides in the nucleus. Functionally, transcriptional coactivator. The polypeptide is Transcriptional adapter 2-beta (tada2b) (Xenopus laevis (African clawed frog)).